We begin with the raw amino-acid sequence, 142 residues long: 3-hydroxyacyl-[acyl-carrier-protein] dehydratase FabZ (142 aa).

His-50 is an active-site residue.

It belongs to the thioester dehydratase family. FabZ subfamily.

It is found in the cytoplasm. The catalysed reaction is a (3R)-hydroxyacyl-[ACP] = a (2E)-enoyl-[ACP] + H2O. Functionally, involved in unsaturated fatty acids biosynthesis. Catalyzes the dehydration of short chain beta-hydroxyacyl-ACPs and long chain saturated and unsaturated beta-hydroxyacyl-ACPs. This chain is 3-hydroxyacyl-[acyl-carrier-protein] dehydratase FabZ, found in Clostridium botulinum (strain Alaska E43 / Type E3).